The primary structure comprises 485 residues: MVDENLYRIKKYSDDTAFSCISKHFITLKDEEIKANNQHLHNVVSQGLIPLMKEDTLFKDIYRNIKYEGSYFKGTKVAKPDEYDLNLSMKLPLNYNELQVETNHKHFSYVKIKVNSESKLPKWEEHSKILNKWLSDKNYLNQNKFHQWMEAIMTNTYKKLKKSDNFYELEVDGKNYRIKQFKKSGPAFTIFVELGDHPTLMSMDIVPCLELNDIILQGYKTFPDVSPSKCVVAKPISKEPEGEFLWRLSFYEQEKQILSNSEVSKLKVVVKMIKKLRDQLNYKPLASYYIETIFLHEIAKRKSDVDFFRASKTSLFIYMLQKLIQALEKKCIPYFWHEGHNLIGHLQPPVIENYANRLKNILLSIDKKIVDDRFAMAEFLLNEEEKKNLLEIVESSKTNGSDTQNLEKSEVIKKIKHVINDGKNKENQNSFATIVTHAIIDRKENDLERRIAFVCEELKNLGQMKEQIPLADLNKLSESFKIMFS.

Residues Ser-70 and 82-84 (EYD) each bind ATP. Residues Glu-82, Asp-84, and Asp-204 each coordinate Mg(2+). GTP is bound by residues Asp-204 and 247-254 (RLSFYEQE). 2 residues coordinate ATP: Lys-271 and Lys-274. 2 residues coordinate Mn(2+): Ile-298 and Asp-304.

The protein belongs to the mab-21 family. Mg(2+) is required as a cofactor. The cofactor is Mn(2+).

It catalyses the reaction GTP + ATP = 2',3'-cGAMP + 2 diphosphate. It carries out the reaction GTP + ATP = pppGp(2'-5')A + diphosphate. The catalysed reaction is pppGp(2'-5')A = 2',3'-cGAMP + diphosphate. Functionally, nucleotidyltransferase that catalyzes the formation of cyclic GMP-AMP (2',3'-cGAMP) from ATP and GTP and plays a key role in innate immunity. Directly binds some unknown ligand, activating the nucleotidyltransferase activity, leading to synthesis of 2',3'-cGAMP, a second messenger that binds to and activates Sting, thereby triggering the immune response via activation of the NF-kappa-B transcription factor. The sequence is that of Cyclic GMP-AMP synthase-like receptor from Trichogramma pretiosum (Parasitoid wasp).